The chain runs to 398 residues: O-methyltransferase mpaG (398 aa).

Position 264 (aspartate 264) interacts with S-adenosyl-L-methionine. The Proton acceptor role is filled by histidine 306. Residues glutamate 335 and glutamate 362 contribute to the active site.

The protein belongs to the class I-like SAM-binding methyltransferase superfamily. Cation-independent O-methyltransferase family. COMT subfamily.

Its subcellular location is the cytoplasm. It is found in the cytosol. It catalyses the reaction (4E,8E)-10-(4,6-dihydroxy-7-methyl-3-oxo-1,3-dihydro-2-benzofuran-5-yl)-4,8-dimethyldeca-4,8-dienoate + S-adenosyl-L-methionine = (4E,8E)-10-(4-hydroxy-6-methoxy-7-methyl-3-oxo-1,3-dihydro-2-benzofuran-5-yl)-4,8-dimethyldeca-4,8-dienoate + S-adenosyl-L-homocysteine + H(+). The protein operates within secondary metabolite biosynthesis; terpenoid biosynthesis. O-methyltransferase; part of the gene cluster that mediates the biosynthesis of mycophenolic acid (MPA), the first isolated antibiotic natural product in the world obtained from a culture of Penicillium brevicompactum in 1893. MpaC methylates farnesyl-DHMP-3C (FDHMP-3C) to yield MFDHMP-3C. The first step of the pathway is the synthesis of 5-methylorsellinic acid (5MOA) by the cytosolic polyketide synthase mpaC. 5MOA is then converted to the phthalide compound 5,7-dihydroxy-4,6-dimethylphthalide (DHMP) by the endoplasmic reticulum-bound cytochrome P450 monooxygenase mpaDE. MpaDE first catalyzes hydroxylation of 5-MOA to 4,6-dihydroxy-2-(hydroxymethyl)-3-methylbenzoic acid (DHMB). MpaDE then acts as a lactone synthase that catalyzes the ring closure to convert DHMB into DHMP. The next step is the prenylation of DHMP by the Golgi apparatus-associated prenyltransferase mpaA to yield farnesyl-DHMP (FDHMP). The ER-bound oxygenase mpaB then mediates the oxidative cleavage the C19-C20 double bond in FDHMP to yield FDHMP-3C via a mycophenolic aldehyde intermediate. The O-methyltransferase mpaG catalyzes the methylation of FDHMP-3C to yield MFDHMP-3C. After the cytosolic methylation of FDHMP-3C, MFDHMP-3C enters into peroxisomes probably via free diffusion due to its low molecular weight. Upon a peroxisomal CoA ligation reaction, catalyzed by a beta-oxidation component enzyme acyl-CoA ligase ACL891, MFDHMP-3C-CoA would then be restricted to peroxisomes for the following beta-oxidation pathway steps. The peroxisomal beta-oxidation machinery than converts MFDHMP-3C-CoA into MPA_CoA, via a beta-oxidation chain-shortening process. Finally mpaH acts as a peroxisomal acyl-CoA hydrolase with high substrate specificity toward MPA-CoA to release the final product MPA. This chain is O-methyltransferase mpaG, found in Penicillium roqueforti (strain FM164).